A 1458-amino-acid chain; its full sequence is ABC multidrug transporter B (1458 aa).

Transmembrane regions (helical) follow at residues 30-50 (FSLL…VLII), 70-90 (LLWA…VLAV), 102-122 (ASIA…LLSC), 128-148 (STTP…FDIA), and 165-185 (IAIL…LEAV). Residue Asn208 is glycosylated (N-linked (GlcNAc...) asparagine). A helical transmembrane segment spans residues 273–295 (WPLLSAVPPRACLAALNFCQPLL). Positions 283-561 (ACLAALNFCQ…LVMALMTFVG (279 aa)) constitute an ABC transmembrane type-1 1 domain. Asn309 is a glycosylation site (N-linked (GlcNAc...) asparagine). Helical transmembrane passes span 314–334 (IGYG…VTMG), 387–407 (WQTI…IYLL), 411–431 (LGVA…GCLI), 501–521 (LGWT…YGIM), and 541–561 (LFAL…TFVG). Residues 626–853 (LTVKNATFAW…AGGYVSSFGL (228 aa)) form the ABC transporter 1 domain. The N-linked (GlcNAc...) asparagine glycan is linked to Asn630. 660-667 (GPSGCGKS) contacts ATP. 3 N-linked (GlcNAc...) asparagine glycosylation sites follow: Asn702, Asn804, and Asn879. The 250-residue stretch at 933–1182 (PNGRTGYYLG…LVTFWTNLET (250 aa)) folds into the ABC transmembrane type-1 2 domain. Helical transmembrane passes span 940–960 (YLGI…IGCW), 978–998 (LLAT…SGSI), 1016–1036 (AAIN…LMGI), 1040–1060 (YAAI…KVYL), 1125–1145 (LTLT…VLVV), and 1156–1176 (VGVA…LVTF). Residues 1219 to 1449 (IEFKSVSAEY…EGSYFSRLYA (231 aa)) form the ABC transporter 2 domain. 1252–1259 (GRTGSGKT) contacts ATP. Asn1316 carries an N-linked (GlcNAc...) asparagine glycan.

This sequence belongs to the ABC transporter superfamily. ABCC family. Conjugate transporter (TC 3.A.1.208) subfamily.

It is found in the cell membrane. In terms of biological role, pleiotropic ABC efflux transporter that may be involved in A.fumigatus adaptation to azoles such as vorizonazole. The sequence is that of ABC multidrug transporter B from Aspergillus fumigatus (strain ATCC MYA-4609 / CBS 101355 / FGSC A1100 / Af293) (Neosartorya fumigata).